The chain runs to 195 residues: 3-isopropylmalate dehydratase small subunit (195 aa).

Belongs to the LeuD family. LeuD type 1 subfamily. In terms of assembly, heterodimer of LeuC and LeuD.

The enzyme catalyses (2R,3S)-3-isopropylmalate = (2S)-2-isopropylmalate. It participates in amino-acid biosynthesis; L-leucine biosynthesis; L-leucine from 3-methyl-2-oxobutanoate: step 2/4. Catalyzes the isomerization between 2-isopropylmalate and 3-isopropylmalate, via the formation of 2-isopropylmaleate. The sequence is that of 3-isopropylmalate dehydratase small subunit from Corynebacterium kroppenstedtii (strain DSM 44385 / JCM 11950 / CIP 105744 / CCUG 35717).